The chain runs to 527 residues: MDGHTCDVFVGKLIHTPSLGELEITDATVGVYNGKIVFLEKSMTPKTLEEAKSHHLLKEATIHKLKPLQFMFPGLIDTHIHAPQYPNSGIGIDVPLLQWLEKYTFPLESSLADLEEARQVYKRVVERTLSNGTTFASYFSTLHTPTSALLAEICYSYGQRAYIGKCNMNNLSPDHYCEKSAESSLEATRQLISYMSILDPKREMVTPIITPRFAPSCTEDLLSGCGELAEKHNLPIQTHISENTSEIELVKELFPERKSYADVYDYYKLLTPQTILAHAIHLEDEEIELLTKRSSGISHCPTSNSILASGLANVRKLLDSGINVGLGTDVSGGYAPSILIALRHAAMTSRSLSYVLGDPKVMLDLSELLYLATQGGAEVVSRGDQVGSFAVGKYWDALIVDLSAETHSCVDIFERDTWPVMLSKWVFTSDDRNLAQVWVNGRLVSGFEMKANLKNSTPLTNGVTSSGHQVFKELTQAHLLPRTQCVDTPPSCCGGHCCKEESCRTENCKGAYPANATVTVEEDSGMS.

Zn(2+) contacts are provided by His-79 and His-81. Substrate contacts are provided by residues 81–84, 212–213, 239–242, and Asp-329; these read HAPQ, RF, and HISE. Zn(2+) contacts are provided by His-239 and Asp-329.

Belongs to the metallo-dependent hydrolases superfamily. ATZ/TRZ family. It depends on Zn(2+) as a cofactor.

The catalysed reaction is guanine + H2O + H(+) = xanthine + NH4(+). Its pathway is purine metabolism; guanine degradation; xanthine from guanine: step 1/1. Its function is as follows. Catalyzes the hydrolytic deamination of guanine, producing xanthine and ammonia. This is Probable guanine deaminase from Schizosaccharomyces pombe (strain 972 / ATCC 24843) (Fission yeast).